A 250-amino-acid chain; its full sequence is tRNA pseudouridine synthase A (250 aa).

Residue Asp-52 is the Nucleophile of the active site. Position 111 (Tyr-111) interacts with substrate.

It belongs to the tRNA pseudouridine synthase TruA family. Homodimer.

It catalyses the reaction uridine(38/39/40) in tRNA = pseudouridine(38/39/40) in tRNA. In terms of biological role, formation of pseudouridine at positions 38, 39 and 40 in the anticodon stem and loop of transfer RNAs. The chain is tRNA pseudouridine synthase A from Methylorubrum extorquens (strain CM4 / NCIMB 13688) (Methylobacterium extorquens).